A 386-amino-acid polypeptide reads, in one-letter code: Protein lin-8 (386 aa).

The sufficient for interaction with lin-35 stretch occupies residues 175-285 (LGLEARRASK…FSQQYGGGGS (111 aa)). Positions 212 to 240 (EEPYEETGSNWSDPAPEPSQSKSQSPEAK) are disordered. A compositionally biased stretch (low complexity) spans 229–240 (PSQSKSQSPEAK).

The protein belongs to the lin-8 family. Interacts with lin-35 (via C-terminus). In terms of tissue distribution, widely expressed throughout development, with particularly prominent expression in the germline and in neuronal nuclei of the head (at protein level).

It localises to the nucleus. Functionally, acts as a synthetic multivulva class A (synMuvA) protein and redundantly inhibits lin-3/EGF expression to prevent inappropriate vulva induction. This Caenorhabditis elegans protein is Protein lin-8.